The following is a 323-amino-acid chain: HTH-type transcriptional activator CmpR (323 aa).

Positions 4–61 constitute an HTH lysR-type domain; the sequence is LTLHQLKVFEAAARHSSFTRAAEELYLTQPTVSIQVKQLTKAVGLPLFEQIGKRLYLT. Residues 21–40 constitute a DNA-binding region (H-T-H motif); the sequence is FTRAAEELYLTQPTVSIQVK. Positions 304–323 are disordered; the sequence is IPESTTTDPELDAPQPVVGV.

It belongs to the LysR transcriptional regulatory family.

It is found in the cytoplasm. Functionally, activates transcription of the cmpABCD operon under carbon dioxide-limited conditions. The polypeptide is HTH-type transcriptional activator CmpR (cmpR) (Synechococcus elongatus (strain ATCC 33912 / PCC 7942 / FACHB-805) (Anacystis nidulans R2)).